A 314-amino-acid chain; its full sequence is Melanocyte-stimulating hormone receptor (314 aa).

The Extracellular segment spans residues 1-35 (MSMLAPLRLVREPWNASEGNQSNATAGAGGAWCQG). N-linked (GlcNAc...) asparagine glycans are attached at residues Asn15, Asn20, and Asn23. Residues 36-61 (LDIPNELFLTLGLVSLVENLLVVAAI) traverse the membrane as a helical segment. The Cytoplasmic portion of the chain corresponds to 62-70 (LKNRNLHSP). Residues 71–91 (TYYFICCLAVSDMLVSVSNLA) form a helical membrane-spanning segment. Residues 92–116 (KTLFMLLMEHGVLVIRASIVRHMDN) are Extracellular-facing. The helical transmembrane segment at 117-138 (VIDMLICSSVVSSLSFLGVIAV) threads the bilayer. Topologically, residues 139–161 (DRYITIFYALRYHSIMTLQRAVV) are cytoplasmic. The helical transmembrane segment at 162-181 (TMASVWLASTVSSTVLITYY) threads the bilayer. The Extracellular portion of the chain corresponds to 182–189 (RNNAILLC). Residues 190–209 (LIGFFLFMLVLMLVLYIHMF) form a helical membrane-spanning segment. Residues 210-237 (ALACHHVRSISSQQKQPTIYRTSSLKGA) are Cytoplasmic-facing. Residues 238–263 (VTLTILLGVFFICWGPFFFHLILIVT) traverse the membrane as a helical segment. The Extracellular portion of the chain corresponds to 264-276 (CPTNPFCTCFFSY). The helical transmembrane segment at 277 to 297 (FNLFLILIICNSVVDPLIYAF) threads the bilayer. At 298–314 (RSQELRRTLREVVLCSW) the chain is on the cytoplasmic side. Cys312 carries S-palmitoyl cysteine lipidation.

This sequence belongs to the G-protein coupled receptor 1 family.

The protein localises to the cell membrane. In terms of biological role, receptor for MSH (alpha, beta and gamma) and ACTH. The activity of this receptor is mediated by G proteins which activate adenylate cyclase. Mediates melanogenesis via regulation of cAMP signaling in melanocytes. In Gallus gallus (Chicken), this protein is Melanocyte-stimulating hormone receptor (MC1R).